Here is a 102-residue protein sequence, read N- to C-terminus: Large ribosomal subunit protein bL21 (102 aa).

Positions Arg79–Pro91 are enriched in basic residues. The disordered stretch occupies residues Arg79–Ala102.

This sequence belongs to the bacterial ribosomal protein bL21 family. Part of the 50S ribosomal subunit. Contacts protein L20.

Functionally, this protein binds to 23S rRNA in the presence of protein L20. The sequence is that of Large ribosomal subunit protein bL21 from Staphylococcus saprophyticus subsp. saprophyticus (strain ATCC 15305 / DSM 20229 / NCIMB 8711 / NCTC 7292 / S-41).